The primary structure comprises 31 residues: GTIPCGESCVYIPCLTSALGCSCKNKVCYRN.

Positions 1-31 form a cross-link, cyclopeptide (Gly-Asn); the sequence is GTIPCGESCVYIPCLTSALGCSCKNKVCYRN. 3 disulfides stabilise this stretch: Cys-5–Cys-21, Cys-9–Cys-23, and Cys-14–Cys-28.

This sequence belongs to the cyclotide family. Bracelet subfamily. This is a cyclic peptide.

Functionally, probably participates in a plant defense mechanism. The chain is Cyclotide mden-N from Melicytus dentatus (Tree violet).